Here is a 105-residue protein sequence, read N- to C-terminus: Flagellar transcriptional regulator FlhD (105 aa).

Belongs to the FlhD family. In terms of assembly, homodimer; disulfide-linked. Forms a heterohexamer composed of two FlhC and four FlhD subunits. Each FlhC binds a FlhD dimer, forming a heterotrimer, and a hexamer assembles by dimerization of two heterotrimers.

The protein resides in the cytoplasm. In terms of biological role, functions in complex with FlhC as a master transcriptional regulator that regulates transcription of several flagellar and non-flagellar operons by binding to their promoter region. Activates expression of class 2 flagellar genes, including fliA, which is a flagellum-specific sigma factor that turns on the class 3 genes. Also regulates genes whose products function in a variety of physiological pathways. In Nitrosomonas europaea (strain ATCC 19718 / CIP 103999 / KCTC 2705 / NBRC 14298), this protein is Flagellar transcriptional regulator FlhD.